The primary structure comprises 464 residues: 3-isopropylmalate dehydratase large subunit (464 aa).

Positions 337, 397, and 400 each coordinate [4Fe-4S] cluster.

It belongs to the aconitase/IPM isomerase family. LeuC type 1 subfamily. As to quaternary structure, heterodimer of LeuC and LeuD. [4Fe-4S] cluster is required as a cofactor.

The catalysed reaction is (2R,3S)-3-isopropylmalate = (2S)-2-isopropylmalate. Its pathway is amino-acid biosynthesis; L-leucine biosynthesis; L-leucine from 3-methyl-2-oxobutanoate: step 2/4. Catalyzes the isomerization between 2-isopropylmalate and 3-isopropylmalate, via the formation of 2-isopropylmaleate. In Bacillus cereus (strain B4264), this protein is 3-isopropylmalate dehydratase large subunit.